The following is a 161-amino-acid chain: Effector CFEM5 (161 aa).

Positions Met-1 to Ala-23 are cleaved as a signal peptide. The region spanning Val-24–Ala-126 is the CFEM domain. Disulfide bonds link Cys-46/Cys-78, Cys-56/Cys-63, and Cys-65/Cys-100. Residue Asp-60 coordinates heme.

This sequence belongs to the RBT5 family. In terms of assembly, interacts with Z.mays LRR5; the interaction is direct. Interacts with Z.mays WAK17 isoform 2; the interaction is direct.

Its subcellular location is the membrane. It localises to the secreted. Suppresses host programmed cell death during infection by binding to Z.mays WAK17 isoform 2 and Z.mays LRR5, to prevent activation of Z.mays WAK17 isoform 1 and the downstream hypersensitive response. This chain is Effector CFEM5, found in Gibberella zeae (strain ATCC MYA-4620 / CBS 123657 / FGSC 9075 / NRRL 31084 / PH-1) (Wheat head blight fungus).